The chain runs to 94 residues: Co-chaperonin GroES (94 aa).

Belongs to the GroES chaperonin family. As to quaternary structure, heptamer of 7 subunits arranged in a ring. Interacts with the chaperonin GroEL.

It localises to the cytoplasm. Functionally, together with the chaperonin GroEL, plays an essential role in assisting protein folding. The GroEL-GroES system forms a nano-cage that allows encapsulation of the non-native substrate proteins and provides a physical environment optimized to promote and accelerate protein folding. GroES binds to the apical surface of the GroEL ring, thereby capping the opening of the GroEL channel. The polypeptide is Co-chaperonin GroES (Streptococcus pneumoniae (strain Hungary19A-6)).